Consider the following 339-residue polypeptide: Endo-beta-N-acetylglucosaminidase F1 (339 aa).

A signal peptide (or 51, or 52) is located at residues 1 to 50; it reads MKKFINQFSASLKNNILVFLAFPFVWTSCARDNPLSSENSNISPNAAARA. The GH18 domain maps to 60 to 326; that stretch reads IKLFSFTEVN…KLIAKELYGD (267 aa). Glu182 serves as the catalytic Proton donor. Position 339 (Trp339) is a propeptide, removed in mature form.

The protein belongs to the glycosyl hydrolase 18 family. Monomer.

The protein resides in the secreted. It catalyses the reaction an N(4)-(oligosaccharide-(1-&gt;3)-[oligosaccharide-(1-&gt;6)]-beta-D-Man-(1-&gt;4)-beta-D-GlcNAc-(1-&gt;4)-alpha-D-GlcNAc)-L-asparaginyl-[protein] + H2O = an oligosaccharide-(1-&gt;3)-[oligosaccharide-(1-&gt;6)]-beta-D-Man-(1-&gt;4)-D-GlcNAc + N(4)-(N-acetyl-beta-D-glucosaminyl)-L-asparaginyl-[protein]. In terms of biological role, endohydrolysis of the di-N-acetylchitobiosyl unit in high-mannose glycopeptides and glycoproteins. Does not hydrolyze complex bi- or triantennary glycans. The presence of a core-bound fucose impedes endo F1 hydrolysis. In Elizabethkingia meningoseptica (Chryseobacterium meningosepticum), this protein is Endo-beta-N-acetylglucosaminidase F1 (endOF1).